Consider the following 417-residue polypeptide: NADP-specific glutamate dehydrogenase A1 (417 aa).

The active site involves Lys-105.

This sequence belongs to the Glu/Leu/Phe/Val dehydrogenases family. As to quaternary structure, homohexamer.

It catalyses the reaction L-glutamate + NADP(+) + H2O = 2-oxoglutarate + NH4(+) + NADPH + H(+). This chain is NADP-specific glutamate dehydrogenase A1 (gdhA1), found in Halobacterium salinarum (Halobacterium halobium).